Here is a 65-residue protein sequence, read N- to C-terminus: Large ribosomal subunit protein bL35 (65 aa).

The protein belongs to the bacterial ribosomal protein bL35 family.

The protein is Large ribosomal subunit protein bL35 of Thermotoga maritima (strain ATCC 43589 / DSM 3109 / JCM 10099 / NBRC 100826 / MSB8).